Here is a 445-residue protein sequence, read N- to C-terminus: UPF0210 protein llmg_1581 (445 aa).

It belongs to the UPF0210 family. In terms of assembly, homodimer.

The sequence is that of UPF0210 protein llmg_1581 from Lactococcus lactis subsp. cremoris (strain MG1363).